Reading from the N-terminus, the 471-residue chain is Trimethyllysine dioxygenase (471 aa).

Fe cation-binding residues include histidine 251 and aspartate 253. A disordered region spans residues 272–302 (KAAPSRPPPPPPPPPPPSEEKEAAGSAAGEA). Over residues 276-288 (SRPPPPPPPPPPP) the composition is skewed to pro residues. Fe cation is bound at residue histidine 430.

This sequence belongs to the gamma-BBH/TMLD family. It depends on Fe(2+) as a cofactor. Requires L-ascorbate as cofactor.

It is found in the cytoplasm. It carries out the reaction N(6),N(6),N(6)-trimethyl-L-lysine + 2-oxoglutarate + O2 = (3S)-3-hydroxy-N(6),N(6),N(6)-trimethyl-L-lysine + succinate + CO2. The protein operates within amine and polyamine biosynthesis; carnitine biosynthesis. Functionally, converts trimethyllysine (TML) into hydroxytrimethyllysine (HTML). In Neurospora crassa (strain ATCC 24698 / 74-OR23-1A / CBS 708.71 / DSM 1257 / FGSC 987), this protein is Trimethyllysine dioxygenase (cbs-1).